We begin with the raw amino-acid sequence, 462 residues long: Argininosuccinate lyase (462 aa).

Belongs to the lyase 1 family. Argininosuccinate lyase subfamily.

It is found in the cytoplasm. It carries out the reaction 2-(N(omega)-L-arginino)succinate = fumarate + L-arginine. It participates in amino-acid biosynthesis; L-arginine biosynthesis; L-arginine from L-ornithine and carbamoyl phosphate: step 3/3. The chain is Argininosuccinate lyase from Bacillus cereus (strain ATCC 14579 / DSM 31 / CCUG 7414 / JCM 2152 / NBRC 15305 / NCIMB 9373 / NCTC 2599 / NRRL B-3711).